Consider the following 498-residue polypeptide: Glycerol kinase (498 aa).

Thr-12 contributes to the ADP binding site. Thr-12, Thr-13, and Ser-14 together coordinate ATP. Thr-12 serves as a coordination point for sn-glycerol 3-phosphate. Arg-16 contacts ADP. Sn-glycerol 3-phosphate contacts are provided by Arg-82, Glu-83, Tyr-134, and Asp-243. Residues Arg-82, Glu-83, Tyr-134, Asp-243, and Gln-244 each contribute to the glycerol site. Residues Thr-265 and Gly-308 each contribute to the ADP site. ATP is bound by residues Thr-265, Gly-308, Gln-312, and Gly-409. ADP-binding residues include Gly-409 and Asn-413.

It belongs to the FGGY kinase family. As to quaternary structure, homotetramer and homodimer (in equilibrium).

It carries out the reaction glycerol + ATP = sn-glycerol 3-phosphate + ADP + H(+). It participates in polyol metabolism; glycerol degradation via glycerol kinase pathway; sn-glycerol 3-phosphate from glycerol: step 1/1. With respect to regulation, activated by phosphorylation and inhibited by fructose 1,6-bisphosphate (FBP). In terms of biological role, key enzyme in the regulation of glycerol uptake and metabolism. Catalyzes the phosphorylation of glycerol to yield sn-glycerol 3-phosphate. This chain is Glycerol kinase, found in Agathobacter rectalis (strain ATCC 33656 / DSM 3377 / JCM 17463 / KCTC 5835 / VPI 0990) (Eubacterium rectale).